The primary structure comprises 597 residues: MAEGSAVSDPQHAARLLRALSSFREESRFCDAHLVLDGEEIPVQKNILAAASPYIRTKLNYNPPKDDGSTYKIELEGISVMVMREILDYIFSGQIRLNEDTIQDVVQAADLLLLTDLKTLCCEFLEGCIAAENCIGIRDFALHYCLHHVHYLATEYLETHFRDVSSTEEFLELSPQKLKEVISLEKLNVGNERYVFEAVIRWIAHDTEIRKVHMKDVMSALWVSGLDSSYLREQMLNEPLVREIVKECSNIPLSQPQQGEAMLANFKPRGYSECIVTVGGEERVSRKPTAAMRCMCPLYDPNRQLWIELAPLSMPRINHGVLSAEGFLFVFGGQDENKQTLSSGEKYDPDANTWTALPPMNEARHNFGIVEIDGMLYILGGEDGEKELISMECYDIYSKTWTKQPDLTMVRKIGCYAAMKKKIYAMGGGSYGKLFESVECYDPRTQQWTAICPLKERRFGAVACGVAMELYVFGGVRSREDAQGSEMVTCKSEFYHDEFKRWIYLNDQNLCIPASSSFVYGAVPIGASIYVIGDLDTGTNYDYVREFKRSTGTWHHTKPLLPSDLRRTGCAALRIANCKLFRLQLQQGLFRIRVHSP.

In terms of domain architecture, BTB spans 30-99 (CDAHLVLDGE…IFSGQIRLNE (70 aa)). The BACK domain occupies 134 to 236 (CIGIRDFALH…DSSYLREQML (103 aa)). Kelch repeat units lie at residues 274–326 (CIVT…SAEG), 327–374 (FLFV…EIDG), 376–421 (LYIL…AMKK), 422–468 (KIYA…GVAM), 470–522 (LYVF…VYGA), and 528–574 (SIYV…AALR).

In terms of assembly, interacts with TBCB. Interacts with CUL3. Part of a complex that contains CUL3, RBX1 and GAN. Interacts (via BTB domain) with UBA1. Interacts (via Kelch domains) with MAP1B (via C-terminus) and MAP1S (via C-terminus). Post-translationally, ubiquitinated by E3 ubiquitin ligase complex formed by CUL3 and RBX1 and probably targeted for proteasome-independent degradation. As to expression, expressed in brain, heart and muscle.

The protein localises to the cytoplasm. It is found in the cytoskeleton. It functions in the pathway protein modification; protein ubiquitination. Its function is as follows. Probable cytoskeletal component that directly or indirectly plays an important role in neurofilament architecture. May act as a substrate-specific adapter of an E3 ubiquitin-protein ligase complex which mediates the ubiquitination and subsequent proteasomal degradation of target proteins. Controls degradation of TBCB. Controls degradation of MAP1B and MAP1S, and is critical for neuronal maintenance and survival. In Homo sapiens (Human), this protein is Gigaxonin (GAN).